A 104-amino-acid polypeptide reads, in one-letter code: Large ribosomal subunit protein uL24 (104 aa).

The protein belongs to the universal ribosomal protein uL24 family. As to quaternary structure, part of the 50S ribosomal subunit.

Its function is as follows. One of two assembly initiator proteins, it binds directly to the 5'-end of the 23S rRNA, where it nucleates assembly of the 50S subunit. In terms of biological role, one of the proteins that surrounds the polypeptide exit tunnel on the outside of the subunit. This is Large ribosomal subunit protein uL24 from Enterobacter sp. (strain 638).